Consider the following 425-residue polypeptide: Serine--tRNA ligase (425 aa).

230–232 (TAE) provides a ligand contact to L-serine. ATP is bound at residue 261-263 (RSE). An L-serine-binding site is contributed by Glu-284. An ATP-binding site is contributed by 348–351 (EISS). Ser-384 serves as a coordination point for L-serine.

The protein belongs to the class-II aminoacyl-tRNA synthetase family. Type-1 seryl-tRNA synthetase subfamily. Homodimer. The tRNA molecule binds across the dimer.

The protein localises to the cytoplasm. It catalyses the reaction tRNA(Ser) + L-serine + ATP = L-seryl-tRNA(Ser) + AMP + diphosphate + H(+). The catalysed reaction is tRNA(Sec) + L-serine + ATP = L-seryl-tRNA(Sec) + AMP + diphosphate + H(+). It functions in the pathway aminoacyl-tRNA biosynthesis; selenocysteinyl-tRNA(Sec) biosynthesis; L-seryl-tRNA(Sec) from L-serine and tRNA(Sec): step 1/1. In terms of biological role, catalyzes the attachment of serine to tRNA(Ser). Is also able to aminoacylate tRNA(Sec) with serine, to form the misacylated tRNA L-seryl-tRNA(Sec), which will be further converted into selenocysteinyl-tRNA(Sec). The sequence is that of Serine--tRNA ligase from Streptococcus thermophilus (strain ATCC BAA-491 / LMD-9).